Reading from the N-terminus, the 209-residue chain is Superoxide dismutase [Mn/Fe] (209 aa).

Residues His-38, His-90, Asp-172, and His-176 each coordinate Fe(3+). Mn(2+) contacts are provided by His-38, His-90, Asp-172, and His-176.

This sequence belongs to the iron/manganese superoxide dismutase family. The cofactor is Mn(2+). Fe(3+) is required as a cofactor.

The catalysed reaction is 2 superoxide + 2 H(+) = H2O2 + O2. Functionally, destroys superoxide anion radicals which are normally produced within the cells and which are toxic to biological systems. Catalyzes the dismutation of superoxide anion radicals into O2 and H2O2 by successive reduction and oxidation of the transition metal ion at the active site. The polypeptide is Superoxide dismutase [Mn/Fe] (sodB) (Rickettsia typhi (strain ATCC VR-144 / Wilmington)).